We begin with the raw amino-acid sequence, 283 residues long: Digeranylgeranylglyceryl phosphate synthase (283 aa).

8 consecutive transmembrane segments (helical) span residues 5 to 27 (VEIIRPGNVIMAIIAVILVAILA), 37 to 57 (AMLAVFFAMSAGNVINDYFDY), 85 to 105 (LLFILAAIVGFLISCLVDTWI), 128 to 148 (PLIGNLTVGFMTGLCFIFAGY), 152 to 172 (EGLIIYESYLLAFFALIMTTA), 203 to 223 (AIIAISLIIIDCALCPLLYIY), 228 to 248 (INYLIVVSIAVLIFLYGAVLL), and 263 to 283 (LKTGMLIAFIAFAIGTFTITF).

The protein belongs to the UbiA prenyltransferase family. DGGGP synthase subfamily. Requires Mg(2+) as cofactor.

It localises to the cell membrane. The enzyme catalyses sn-3-O-(geranylgeranyl)glycerol 1-phosphate + (2E,6E,10E)-geranylgeranyl diphosphate = 2,3-bis-O-(geranylgeranyl)-sn-glycerol 1-phosphate + diphosphate. It participates in membrane lipid metabolism; glycerophospholipid metabolism. In terms of biological role, prenyltransferase that catalyzes the transfer of the geranylgeranyl moiety of geranylgeranyl diphosphate (GGPP) to the C2 hydroxyl of (S)-3-O-geranylgeranylglyceryl phosphate (GGGP). This reaction is the second ether-bond-formation step in the biosynthesis of archaeal membrane lipids. This chain is Digeranylgeranylglyceryl phosphate synthase, found in Methanobrevibacter smithii (strain ATCC 35061 / DSM 861 / OCM 144 / PS).